A 522-amino-acid polypeptide reads, in one-letter code: Gypsy retrotransposon integrase-like protein 1 (522 aa).

The region spanning 135 to 292 (KVENPWSLVT…TPYFQMFSRN (158 aa)) is the Integrase catalytic domain. Residue S502 is modified to Phosphoserine.

Widely expressed. Also found in tumors originating from parathyroid gland, colon, stomach, bladder, uterus and prostate.

This Homo sapiens (Human) protein is Gypsy retrotransposon integrase-like protein 1 (GIN1).